We begin with the raw amino-acid sequence, 370 residues long: Dual-specificity RNA methyltransferase RlmN (370 aa).

Glu-93 acts as the Proton acceptor in catalysis. Residues 99–337 enclose the Radical SAM core domain; the sequence is EEGRGTLCVS…VTTVRKTRGD (239 aa). An intrachain disulfide couples Cys-106 to Cys-343. The [4Fe-4S] cluster site is built by Cys-113, Cys-117, and Cys-120. S-adenosyl-L-methionine contacts are provided by residues 167 to 168, Ser-199, 221 to 223, and Asn-300; these read GE and SLH. Residue Cys-343 is the S-methylcysteine intermediate of the active site.

It belongs to the radical SAM superfamily. RlmN family. It depends on [4Fe-4S] cluster as a cofactor.

It localises to the cytoplasm. It catalyses the reaction adenosine(2503) in 23S rRNA + 2 reduced [2Fe-2S]-[ferredoxin] + 2 S-adenosyl-L-methionine = 2-methyladenosine(2503) in 23S rRNA + 5'-deoxyadenosine + L-methionine + 2 oxidized [2Fe-2S]-[ferredoxin] + S-adenosyl-L-homocysteine. It carries out the reaction adenosine(37) in tRNA + 2 reduced [2Fe-2S]-[ferredoxin] + 2 S-adenosyl-L-methionine = 2-methyladenosine(37) in tRNA + 5'-deoxyadenosine + L-methionine + 2 oxidized [2Fe-2S]-[ferredoxin] + S-adenosyl-L-homocysteine. Its function is as follows. Specifically methylates position 2 of adenine 2503 in 23S rRNA and position 2 of adenine 37 in tRNAs. m2A2503 modification seems to play a crucial role in the proofreading step occurring at the peptidyl transferase center and thus would serve to optimize ribosomal fidelity. This is Dual-specificity RNA methyltransferase RlmN from Francisella tularensis subsp. novicida (strain U112).